Here is a 695-residue protein sequence, read N- to C-terminus: Elongation factor G (695 aa).

The 276-residue stretch at 4-279 (EKVRNIGISA…AVTQYLPSPL (276 aa)) folds into the tr-type G domain. GTP contacts are provided by residues 13 to 20 (AHIDSGKT), 79 to 83 (DTPGH), and 133 to 136 (NKMD).

The protein belongs to the TRAFAC class translation factor GTPase superfamily. Classic translation factor GTPase family. EF-G/EF-2 subfamily.

Its subcellular location is the cytoplasm. Catalyzes the GTP-dependent ribosomal translocation step during translation elongation. During this step, the ribosome changes from the pre-translocational (PRE) to the post-translocational (POST) state as the newly formed A-site-bound peptidyl-tRNA and P-site-bound deacylated tRNA move to the P and E sites, respectively. Catalyzes the coordinated movement of the two tRNA molecules, the mRNA and conformational changes in the ribosome. The sequence is that of Elongation factor G from Rhodopirellula baltica (strain DSM 10527 / NCIMB 13988 / SH1).